The sequence spans 311 residues: Ribosomal RNA small subunit methyltransferase H (311 aa).

Residues 32-34 (AGH), Asp-52, Phe-79, Asp-100, and Gln-107 contribute to the S-adenosyl-L-methionine site.

Belongs to the methyltransferase superfamily. RsmH family.

Its subcellular location is the cytoplasm. It catalyses the reaction cytidine(1402) in 16S rRNA + S-adenosyl-L-methionine = N(4)-methylcytidine(1402) in 16S rRNA + S-adenosyl-L-homocysteine + H(+). Its function is as follows. Specifically methylates the N4 position of cytidine in position 1402 (C1402) of 16S rRNA. The chain is Ribosomal RNA small subunit methyltransferase H from Staphylococcus aureus (strain Mu3 / ATCC 700698).